Consider the following 86-residue polypeptide: Toxin 3FTx-Dis4 (86 aa).

The N-terminal stretch at 1–19 (MKTLLLSLVMVGFMYLVSG) is a signal peptide. Disulfide bonds link cysteine 24–cysteine 45, cysteine 38–cysteine 63, and cysteine 79–cysteine 84.

The protein belongs to the three-finger toxin family. Ancestral subfamily. Expressed by the venom gland.

The protein localises to the secreted. The chain is Toxin 3FTx-Dis4 from Dispholidus typus (Boomslang).